The primary structure comprises 662 residues: Polyadenylate-binding protein 4 (662 aa).

Positions 1–23 (MAQVQAPSSHSPPPPAVVNDGAA) are disordered. RRM domains lie at 46–124 (CSLY…YSSR), 134–211 (GNLF…PFLR), 225–302 (TNVY…KAQK), and 328–405 (LNLY…LAQR). 2 stretches are compositionally biased toward low complexity: residues 480–489 (PMMQPGQQGP) and 506–518 (QQPM…QMMP). Disordered stretches follow at residues 480-518 (PMMQ…QMMP) and 634-662 (NQPS…NDHL). Positions 558 to 635 (SAGQLATSLA…ALDVLRNVNQ (78 aa)) constitute a PABC domain. Over residues 634–649 (NQPSSQGSEGNKSGSP) the composition is skewed to polar residues.

The protein belongs to the polyadenylate-binding protein type-1 family. In terms of assembly, interacts with ERD15/CID1. Interacts with Turnip mosaic virus (TuMV) VPg-Pro.

Its subcellular location is the cytoplasm. The protein localises to the nucleus. Binds the poly(A) tail of mRNA. Appears to be an important mediator of the multiple roles of the poly(A) tail in mRNA biogenesis, stability and translation. During infection with potyvirus TuMV, acts as a potential integral component of the viral replicase complex that could play an important role in the regulation of potyviral RNA-dependent RNA polymerase (RdRp). This is Polyadenylate-binding protein 4 (PAB4) from Arabidopsis thaliana (Mouse-ear cress).